The primary structure comprises 793 residues: RNA-binding protein spenito (793 aa).

Disordered stretches follow at residues 1 to 93 (MSSH…PPAE) and 243 to 296 (HHDY…KKDK). The segment covering 25–42 (SRSPGPASRSSLSRNSRS) has biased composition (low complexity). Basic residues predominate over residues 257–268 (RGGHPHHLHGHA). A compositionally biased stretch (basic and acidic residues) spans 285–296 (APYEKPESKKDK). 2 consecutive RRM domains span residues 314 to 391 (RTLF…YGKV) and 395 to 469 (TRMW…FAEL). A disordered region spans residues 507-623 (YAPRGGYSPY…RNDALASAST (117 aa)). Positions 526–536 (GGYRGRGRGMY) are enriched in basic residues. Residues 566 to 593 (DEWRRPPGESYDRGARSSSREPGVERSR) show a composition bias toward basic and acidic residues. Residues 624-791 (VPDVARKCST…HLVIVVVRGG (168 aa)) enclose the SPOC domain.

Belongs to the RRM Spen family. As to quaternary structure, component of the WMM complex, a N6-methyltransferase complex composed of a catalytic subcomplex, named MAC, and of an associated subcomplex, named MACOM. The MAC subcomplex is composed of Ime4/Mettl3 and Mettl14. The MACOM subcomplex is composed of fl(2)d, Flacc/Xio, Hakai, vir, and, in some cases of nito. Interacts with Sxl. Interacts with Hipk; leading to phosphorylation. Phosphorylated by Hipk at Ser-23, Ser-25 and/or Ser-27; the precise position if phosphorylation sites is unknown. Widely expressed. Shows some enrichment in the central nervous system.

It localises to the nucleus. In terms of biological role, RNA-binding protein that acts as an associated component of the WMM complex, a complex that mediates N6-methyladenosine (m6A) methylation of mRNAs. M6a modification plays a role in the efficiency of mRNA splicing and is required for sex determination. In the WMM complex, may act by binding target RNAs and recruiting the WMM complex. Required for sex determination and dosage compensation via Sxl alternative splicing: m6A methylation acts as a key regulator of Sxl pre-mRNA and promotes female-specific alternative splicing of Sxl, which determines female physiognomy. M6A methylation is also required for neuronal functions. Acts as a positive regulator of canonical Wg signaling during wing disk and eye development. This is RNA-binding protein spenito from Drosophila melanogaster (Fruit fly).